The chain runs to 149 residues: Calmodulin-like protein 3 (149 aa).

EF-hand domains lie at 8–43 (EQIA…LGQN), 44–79 (PTEA…KMKD), 81–116 (DSEE…LGEK), and 117–149 (LSDE…LVSK). Residues aspartate 21, aspartate 23, aspartate 25, cysteine 27, glutamate 32, aspartate 57, aspartate 59, asparagine 61, threonine 63, glutamate 68, aspartate 94, aspartate 96, asparagine 98, glutamate 105, aspartate 130, aspartate 132, aspartate 134, glutamine 136, and glutamate 141 each contribute to the Ca(2+) site.

The protein belongs to the calmodulin family. In terms of assembly, interacts with MYO10, the interaction is calcium-dependent and essential for MYO10 function in filopodial extension.

In terms of biological role, may function as a specific light chain of unconventional myosin-10 (MYO10), also enhances MYO10 translation, possibly by acting as a chaperone for the emerging MYO10 heavy chain protein. May compete with calmodulin by binding, with different affinities, to cellular substrates. The chain is Calmodulin-like protein 3 (Calml3) from Rattus norvegicus (Rat).